Consider the following 477-residue polypeptide: Cysteine--tRNA ligase (477 aa).

Residue Cys28 participates in Zn(2+) binding. The 'HIGH' region motif lies at 30 to 40; sequence PTVYDYPHLGH. Zn(2+) contacts are provided by Cys208, His233, and Glu237. The 'KMSKS' region signature appears at 265-269; the sequence is KMSKS. Lys268 is an ATP binding site.

Belongs to the class-I aminoacyl-tRNA synthetase family. Requires Zn(2+) as cofactor.

It is found in the cytoplasm. The catalysed reaction is tRNA(Cys) + L-cysteine + ATP = L-cysteinyl-tRNA(Cys) + AMP + diphosphate. This is Cysteine--tRNA ligase from Pyrococcus furiosus (strain ATCC 43587 / DSM 3638 / JCM 8422 / Vc1).